Consider the following 334-residue polypeptide: Procathepsin L (334 aa).

An N-terminal signal peptide occupies residues 1–17 (MNLLLLLAVLCLGTALA). A propeptide spans 18 to 113 (TPKFDQTFSA…RLFQEPLMLK (96 aa)) (activation peptide). Glutamate 122 is a Zn(2+) binding site. 2 cysteine pairs are disulfide-bonded: cysteine 135–cysteine 178 and cysteine 169–cysteine 211. The active site involves cysteine 138. Glutamate 163, aspartate 184, glutamate 199, and glutamate 205 together coordinate Zn(2+). An N-linked (GlcNAc...) (high mannose) asparagine glycan is attached at asparagine 221. Positions 227, 250, 253, and 275 each coordinate Zn(2+). A disulfide bridge connects residues cysteine 269 and cysteine 322. Histidine 276 is a catalytic residue. The propeptide occupies 289 to 290 (DS). The active site involves asparagine 300.

It belongs to the peptidase C1 family. As to quaternary structure, dimer of a heavy and a light chain linked by disulfide bonds. Interacts with Long isoform of CD74/Ii chain; the interaction stabilizes the conformation of mature CTSL. Post-translationally, during export along the endocytic pathway, pro-CTSL undergoes several proteolytic cleavages to generate the CTSL single-chain and two-chain mature forms, composed of a heavy chain linked to a light chain by disulfide bonds. Autocleavage; produces the single-chain CTSL after cleavage of the propeptide. The cleavage can be intermolecular. Expressed in thymus, kidney and liver. Expressed in thyroid epithelial cells. Expressed in cortical thymic epithelial cells. Expressed by antigen presenting cells (APCs) such as dendritic cells and macrophages.

The protein resides in the lysosome. The protein localises to the apical cell membrane. It is found in the secreted. Its subcellular location is the extracellular space. It localises to the cytoplasmic vesicle. The protein resides in the secretory vesicle. The protein localises to the chromaffin granule. The enzyme catalyses Specificity close to that of papain. As compared to cathepsin B, cathepsin L exhibits higher activity toward protein substrates, but has little activity on Z-Arg-Arg-NHMec, and no peptidyl-dipeptidase activity.. With respect to regulation, long isoform of CD74/Ii chain stabilizes the conformation of mature CTSL by binding to its active site and serving as a chaperone to help maintain a pool of mature enzyme in endocytic compartments and extracellular space of APCs. IFNG enhances the conversion into the CTSL mature and active form. Inhibited by CST6. Inhibited by the glycopeptide antibiotic teicoplanin. Inhibited by amantadine. In terms of biological role, thiol protease important for the overall degradation of proteins in lysosomes. Involved in the solubilization of cross-linked TG/thyroglobulin and in the subsequent release of thyroid hormone thyroxine (T4) by limited proteolysis of TG/thyroglobulin in the thyroid follicle lumen. In neuroendocrine chromaffin cells secretory vesicles, catalyzes the prohormone proenkephalin processing to the active enkephalin peptide neurotransmitter. In thymus, regulates CD4(+) T cell positive selection by generating the major histocompatibility complex class II (MHCII) bound peptide ligands presented by cortical thymic epithelial cells. Also mediates invariant chain processing in cortical thymic epithelial cells. Major elastin-degrading enzyme at neutral pH. Accumulates as a mature and active enzyme in the extracellular space of antigen presenting cells (APCs) to regulate degradation of the extracellular matrix in the course of inflammation. Secreted form generates endostatin from COL18A1. Critical for cardiac morphology and function. Plays an important role in hair follicle morphogenesis and cycling, as well as epidermal differentiation. Required for maximal stimulation of steroidogenesis by TIMP1. The chain is Procathepsin L from Mus musculus (Mouse).